Reading from the N-terminus, the 115-residue chain is U3-lycotoxin-Ls1n (115 aa).

A signal peptide spans methionine 1–alanine 20. Residues glutamate 21 to arginine 44 constitute a propeptide that is removed on maturation. 4 disulfide bridges follow: cysteine 48–cysteine 63, cysteine 55–cysteine 72, cysteine 62–cysteine 87, and cysteine 74–cysteine 85.

Belongs to the neurotoxin 19 (CSTX) family. 01 subfamily. Expressed by the venom gland.

It is found in the secreted. This is U3-lycotoxin-Ls1n from Lycosa singoriensis (Wolf spider).